The primary structure comprises 331 residues: Probable allantoicase (331 aa).

The protein belongs to the allantoicase family.

It catalyses the reaction allantoate + H2O = (S)-ureidoglycolate + urea. It participates in nitrogen metabolism; (S)-allantoin degradation; (S)-ureidoglycolate from allantoate (aminidohydrolase route): step 1/1. This Pseudomonas fluorescens (strain Pf0-1) protein is Probable allantoicase.